A 351-amino-acid polypeptide reads, in one-letter code: Beta-hexosaminidase (351 aa).

Residues aspartate 62, arginine 70, arginine 134, and 164–165 each bind substrate; that span reads KH. Histidine 177 acts as the Proton donor/acceptor in catalysis. The Nucleophile role is filled by aspartate 249.

Belongs to the glycosyl hydrolase 3 family. NagZ subfamily.

The protein localises to the cytoplasm. It carries out the reaction Hydrolysis of terminal non-reducing N-acetyl-D-hexosamine residues in N-acetyl-beta-D-hexosaminides.. Its pathway is cell wall biogenesis; peptidoglycan recycling. Its function is as follows. Plays a role in peptidoglycan recycling by cleaving the terminal beta-1,4-linked N-acetylglucosamine (GlcNAc) from peptide-linked peptidoglycan fragments, giving rise to free GlcNAc, anhydro-N-acetylmuramic acid and anhydro-N-acetylmuramic acid-linked peptides. The chain is Beta-hexosaminidase from Histophilus somni (strain 129Pt) (Haemophilus somnus).